A 252-amino-acid chain; its full sequence is Hydroxyacylglutathione hydrolase (252 aa).

Residues histidine 52, histidine 54, aspartate 56, histidine 57, histidine 107, aspartate 128, and histidine 166 each contribute to the Zn(2+) site.

This sequence belongs to the metallo-beta-lactamase superfamily. Glyoxalase II family. Monomer. Zn(2+) serves as cofactor.

It carries out the reaction an S-(2-hydroxyacyl)glutathione + H2O = a 2-hydroxy carboxylate + glutathione + H(+). The protein operates within secondary metabolite metabolism; methylglyoxal degradation; (R)-lactate from methylglyoxal: step 2/2. Functionally, thiolesterase that catalyzes the hydrolysis of S-D-lactoyl-glutathione to form glutathione and D-lactic acid. This chain is Hydroxyacylglutathione hydrolase, found in Neisseria meningitidis serogroup C (strain 053442).